The following is a 404-amino-acid chain: Pyruvate-flavodoxin oxidoreductase (404 aa).

It belongs to the pyruvate:ferredoxin/flavodoxin oxidoreductase family.

The catalysed reaction is oxidized [flavodoxin] + pyruvate + CoA + 2 H(+) = reduced [flavodoxin] + acetyl-CoA + CO2. Functionally, oxidoreductase required for the transfer of electrons from pyruvate to flavodoxin, which reduces nitrogenase. The chain is Pyruvate-flavodoxin oxidoreductase (nifJ) from Nostoc sp. (strain ATCC 29151 / PCC 7119) (Anabaena sp.).